Reading from the N-terminus, the 1093-residue chain is NACHT, LRR and PYD domains-containing protein 14 (1093 aa).

Residues 1–97 form the Pyrin domain; the sequence is MADSSSSSFF…CERAKEEINW (97 aa). The disordered stretch occupies residues 102–121; it reads IGPDDAKAGETQEDQEAVLG. The NACHT domain maps to 177–499; sequence QIVVLQGAAG…MFYMLKGSWE (323 aa). 183 to 190 provides a ligand contact to ATP; sequence GAAGVGKT. 11 LRR repeats span residues 730 to 750, 759 to 780, 787 to 807, 816 to 836, 844 to 864, 873 to 894, 901 to 921, 930 to 951, 958 to 978, 987 to 1008, and 1015 to 1035; these read NLMH…KSLC, KLQT…NISN, SLIF…QLLC, YLER…EYLS, RLTH…KLMS, TLKS…YLST, SLTH…KLLC, NLQD…DLAS, NLRS…KILC, NIQR…DLSS, and RLIK…VKLY.

This sequence belongs to the NLRP family. As to expression, testis-specific.

The protein resides in the cytoplasm. Functionally, may be involved in inflammation and spermatogenesis. This chain is NACHT, LRR and PYD domains-containing protein 14 (NLRP14), found in Homo sapiens (Human).